A 258-amino-acid chain; its full sequence is Aspartate/glutamate leucyltransferase (258 aa).

This sequence belongs to the R-transferase family. Bpt subfamily.

The protein resides in the cytoplasm. The enzyme catalyses N-terminal L-glutamyl-[protein] + L-leucyl-tRNA(Leu) = N-terminal L-leucyl-L-glutamyl-[protein] + tRNA(Leu) + H(+). It carries out the reaction N-terminal L-aspartyl-[protein] + L-leucyl-tRNA(Leu) = N-terminal L-leucyl-L-aspartyl-[protein] + tRNA(Leu) + H(+). In terms of biological role, functions in the N-end rule pathway of protein degradation where it conjugates Leu from its aminoacyl-tRNA to the N-termini of proteins containing an N-terminal aspartate or glutamate. This chain is Aspartate/glutamate leucyltransferase, found in Bradyrhizobium sp. (strain ORS 278).